We begin with the raw amino-acid sequence, 97 residues long: YcgL domain-containing protein Tcr_0238 (97 aa).

The region spanning 3-87 (LLVSAYKSAK…SEIEKMGDMP (85 aa)) is the YcgL domain. The tract at residues 78-97 (SEIEKMGDMPPPPEHLDNIF) is disordered.

The chain is YcgL domain-containing protein Tcr_0238 from Hydrogenovibrio crunogenus (strain DSM 25203 / XCL-2) (Thiomicrospira crunogena).